Reading from the N-terminus, the 324-residue chain is Non-homologous end joining protein Ku 1 (324 aa).

Residues 10–193 form the Ku domain; that stretch reads INFGLVTIPV…AKPSDKEIQM (184 aa). Residues 256–324 form a disordered region; the sequence is QARRGRGGQV…SGGRRRRRAS (69 aa). Residues 281 to 292 are compositionally biased toward basic and acidic residues; it reads AELDKKAKELGI.

This sequence belongs to the prokaryotic Ku family. Homodimer. Interacts with LigD.

Its function is as follows. With LigD forms a non-homologous end joining (NHEJ) DNA repair enzyme, which repairs dsDNA breaks with reduced fidelity. Binds linear dsDNA with 5'- and 3'- overhangs but not closed circular dsDNA nor ssDNA. Recruits and stimulates the ligase activity of LigD. The sequence is that of Non-homologous end joining protein Ku 1 from Saccharopolyspora erythraea (strain ATCC 11635 / DSM 40517 / JCM 4748 / NBRC 13426 / NCIMB 8594 / NRRL 2338).